A 416-amino-acid polypeptide reads, in one-letter code: Tyrosine--tRNA ligase (416 aa).

Tyr40 is an L-tyrosine binding site. Positions 45–54 match the 'HIGH' region motif; sequence ATAASLHVGH. Tyr177 and Gln181 together coordinate L-tyrosine. The 'KMSKS' region motif lies at 237-241; the sequence is KMGKS. Residue Lys240 participates in ATP binding. The 66-residue stretch at 351–416 folds into the S4 RNA-binding domain; it reads LSVAHFLVAA…RKKHKLVRLS (66 aa).

It belongs to the class-I aminoacyl-tRNA synthetase family. TyrS type 1 subfamily. Homodimer.

It is found in the cytoplasm. It catalyses the reaction tRNA(Tyr) + L-tyrosine + ATP = L-tyrosyl-tRNA(Tyr) + AMP + diphosphate + H(+). Functionally, catalyzes the attachment of tyrosine to tRNA(Tyr) in a two-step reaction: tyrosine is first activated by ATP to form Tyr-AMP and then transferred to the acceptor end of tRNA(Tyr). In Cereibacter sphaeroides (strain KD131 / KCTC 12085) (Rhodobacter sphaeroides), this protein is Tyrosine--tRNA ligase.